The following is a 164-amino-acid chain: Ribosome-binding factor A (164 aa).

The protein belongs to the RbfA family. In terms of assembly, monomer. Binds 30S ribosomal subunits, but not 50S ribosomal subunits or 70S ribosomes.

The protein resides in the cytoplasm. Functionally, one of several proteins that assist in the late maturation steps of the functional core of the 30S ribosomal subunit. Associates with free 30S ribosomal subunits (but not with 30S subunits that are part of 70S ribosomes or polysomes). Required for efficient processing of 16S rRNA. May interact with the 5'-terminal helix region of 16S rRNA. The protein is Ribosome-binding factor A of Caulobacter sp. (strain K31).